Consider the following 352-residue polypeptide: Nicotinate-nucleotide--dimethylbenzimidazole phosphoribosyltransferase (352 aa).

The active-site Proton acceptor is Glu318.

This sequence belongs to the CobT family.

The enzyme catalyses 5,6-dimethylbenzimidazole + nicotinate beta-D-ribonucleotide = alpha-ribazole 5'-phosphate + nicotinate + H(+). It functions in the pathway nucleoside biosynthesis; alpha-ribazole biosynthesis; alpha-ribazole from 5,6-dimethylbenzimidazole: step 1/2. In terms of biological role, catalyzes the synthesis of alpha-ribazole-5'-phosphate from nicotinate mononucleotide (NAMN) and 5,6-dimethylbenzimidazole (DMB). This Dehalococcoides mccartyi (strain CBDB1) protein is Nicotinate-nucleotide--dimethylbenzimidazole phosphoribosyltransferase.